Consider the following 247-residue polypeptide: Orotidine 5'-phosphate decarboxylase (247 aa).

Substrate contacts are provided by residues Asp-22, Lys-44, 71–80 (DLKFHDIPNT), Thr-131, Arg-192, Gln-201, Gly-221, and Arg-222. Lys-73 acts as the Proton donor in catalysis.

It belongs to the OMP decarboxylase family. Type 1 subfamily. In terms of assembly, homodimer.

The catalysed reaction is orotidine 5'-phosphate + H(+) = UMP + CO2. Its pathway is pyrimidine metabolism; UMP biosynthesis via de novo pathway; UMP from orotate: step 2/2. In terms of biological role, catalyzes the decarboxylation of orotidine 5'-monophosphate (OMP) to uridine 5'-monophosphate (UMP). This is Orotidine 5'-phosphate decarboxylase from Pectobacterium carotovorum subsp. carotovorum (strain PC1).